The chain runs to 79 residues: Sulfur carrier protein TusA (79 aa).

The Cysteine persulfide intermediate role is filled by cysteine 17.

The protein belongs to the sulfur carrier protein TusA family.

Its subcellular location is the cytoplasm. In terms of biological role, sulfur carrier protein which probably makes part of a sulfur-relay system. The chain is Sulfur carrier protein TusA from Pasteurella multocida (strain Pm70).